Reading from the N-terminus, the 281-residue chain is HTH-type transcriptional activator RamA (281 aa).

In terms of domain architecture, HTH luxR-type spans 213–278 (RIKQTTKLSA…EAVNAARRIG (66 aa)).

Its function is as follows. RamA is a master regulator of acetate metabolism. It positively controls the expression of acnA, aceA, aceB, ack, pta and ramB genes in the presence of acetate. RamA is also a positive regulator of rpf2 gene expression during growth on glucose as the sole carbon source. The protein is HTH-type transcriptional activator RamA of Corynebacterium glutamicum (strain ATCC 13032 / DSM 20300 / JCM 1318 / BCRC 11384 / CCUG 27702 / LMG 3730 / NBRC 12168 / NCIMB 10025 / NRRL B-2784 / 534).